A 464-amino-acid chain; its full sequence is Cyclin-dependent kinase 8 (464 aa).

The interaction with CCNC stretch occupies residues 1–15; the sequence is MGYDFKVKLTGERER. In terms of domain architecture, Protein kinase spans 21 to 335; it reads EYEGCKVGRG…SEQAMQDPYF (315 aa). Residues 27-35 and K52 each bind ATP; that span reads VGRGTYGHV. The active-site Proton acceptor is D151. Residues 360–464 are disordered; sequence TEEEPEDKAD…PQYSHQTHRY (105 aa). Positions 373–390 are enriched in low complexity; the sequence is QQQQQGNNHTNGAGHTGN. Polar residues-rich tracts occupy residues 410–426 and 434–446; these read TATS…QRSN and PGPS…SSMG. The span at 447–464 shows a compositional bias: low complexity; it reads YSSTSQQPPQYSHQTHRY.

This sequence belongs to the protein kinase superfamily. CMGC Ser/Thr protein kinase family. CDC2/CDKX subfamily. Component of the Mediator complex. Interacts with ccnc. The cofactor is Mg(2+).

The protein resides in the nucleus. The enzyme catalyses L-seryl-[protein] + ATP = O-phospho-L-seryl-[protein] + ADP + H(+). It catalyses the reaction L-threonyl-[protein] + ATP = O-phospho-L-threonyl-[protein] + ADP + H(+). It carries out the reaction [DNA-directed RNA polymerase] + ATP = phospho-[DNA-directed RNA polymerase] + ADP + H(+). In terms of biological role, component of the Mediator complex, a coactivator involved in regulated gene transcription of nearly all RNA polymerase II-dependent genes. Mediator functions as a bridge to convey information from gene-specific regulatory proteins to the basal RNA polymerase II transcription machinery. Mediator is recruited to promoters by direct interactions with regulatory proteins and serves as a scaffold for the assembly of a functional pre-initiation complex with RNA polymerase II and the general transcription factors. Phosphorylates the CTD (C-terminal domain) of the large subunit of RNA polymerase II (RNAp II), which may inhibit the formation of a transcription initiation complex. The protein is Cyclin-dependent kinase 8 (cdk8) of Danio rerio (Zebrafish).